Consider the following 154-residue polypeptide: Cytochrome c-type biogenesis protein CcmE (154 aa).

Over 1 to 8 (MTPQRKRR) the chain is Cytoplasmic. The chain crosses the membrane as a helical; Signal-anchor for type II membrane protein span at residues 9 to 29 (LVMLAALAGGVGVAVALALAA). The Periplasmic portion of the chain corresponds to 30 to 154 (LQQNINLFYS…GGTPAAEPQP (125 aa)). The heme site is built by histidine 124 and tyrosine 128. Residues 130–154 (PPEAAHALKQGAATSGGTPAAEPQP) are disordered.

The protein belongs to the CcmE/CycJ family.

The protein localises to the cell inner membrane. Its function is as follows. Heme chaperone required for the biogenesis of c-type cytochromes. Transiently binds heme delivered by CcmC and transfers the heme to apo-cytochromes in a process facilitated by CcmF and CcmH. The chain is Cytochrome c-type biogenesis protein CcmE from Bordetella petrii (strain ATCC BAA-461 / DSM 12804 / CCUG 43448).